Reading from the N-terminus, the 141-residue chain is Nucleoside diphosphate kinase (141 aa).

The ATP site is built by Lys11, Phe59, Arg87, Thr93, Arg104, and Asn114. The active-site Pros-phosphohistidine intermediate is His117.

Belongs to the NDK family. Homotetramer. Requires Mg(2+) as cofactor.

Its subcellular location is the cytoplasm. The enzyme catalyses a 2'-deoxyribonucleoside 5'-diphosphate + ATP = a 2'-deoxyribonucleoside 5'-triphosphate + ADP. It catalyses the reaction a ribonucleoside 5'-diphosphate + ATP = a ribonucleoside 5'-triphosphate + ADP. Major role in the synthesis of nucleoside triphosphates other than ATP. The ATP gamma phosphate is transferred to the NDP beta phosphate via a ping-pong mechanism, using a phosphorylated active-site intermediate. The chain is Nucleoside diphosphate kinase from Burkholderia mallei (strain NCTC 10247).